The following is a 134-amino-acid chain: Small ribosomal subunit protein uS9 (134 aa).

Residues 109-134 (DARRTEPHKPSKSTKGPRAKRQKSYR) form a disordered region. Basic residues predominate over residues 118–134 (PSKSTKGPRAKRQKSYR).

This sequence belongs to the universal ribosomal protein uS9 family.

The sequence is that of Small ribosomal subunit protein uS9 from Methanococcus aeolicus (strain ATCC BAA-1280 / DSM 17508 / OCM 812 / Nankai-3).